Consider the following 415-residue polypeptide: Actin-like protein 7B (415 aa).

The tract at residues 1 to 35 (MATRNSPMALGTAQGDPGEAGTRPGSDAGLRDTGA) is disordered. Position 6 is a phosphoserine (Ser6).

This sequence belongs to the actin family.

It localises to the cytoplasm. The protein resides in the cytoskeleton. The polypeptide is Actin-like protein 7B (ACTL7B) (Macaca fascicularis (Crab-eating macaque)).